A 263-amino-acid chain; its full sequence is Putative hydro-lyase GK2103 (263 aa).

The protein belongs to the D-glutamate cyclase family.

The sequence is that of Putative hydro-lyase GK2103 from Geobacillus kaustophilus (strain HTA426).